The chain runs to 341 residues: Ketol-acid reductoisomerase (NADP(+)) (341 aa).

In terms of domain architecture, KARI N-terminal Rossmann spans 2–181; the sequence is AKVYYNGDAN…GATRAGVLET (180 aa). NADP(+)-binding positions include 25–28, Arg48, Ser52, and 82–85; these read YGSQ and DEKQ. His107 is an active-site residue. Position 133 (Gly133) interacts with NADP(+). The 146-residue stretch at 182 to 327 folds into the KARI C-terminal knotted domain; that stretch reads TFKEETETDL…RELRSMMPFV (146 aa). 4 residues coordinate Mg(2+): Asp190, Glu194, Glu226, and Glu230. Position 251 (Ser251) interacts with substrate.

The protein belongs to the ketol-acid reductoisomerase family. Mg(2+) is required as a cofactor.

It catalyses the reaction (2R)-2,3-dihydroxy-3-methylbutanoate + NADP(+) = (2S)-2-acetolactate + NADPH + H(+). The catalysed reaction is (2R,3R)-2,3-dihydroxy-3-methylpentanoate + NADP(+) = (S)-2-ethyl-2-hydroxy-3-oxobutanoate + NADPH + H(+). The protein operates within amino-acid biosynthesis; L-isoleucine biosynthesis; L-isoleucine from 2-oxobutanoate: step 2/4. It functions in the pathway amino-acid biosynthesis; L-valine biosynthesis; L-valine from pyruvate: step 2/4. In terms of biological role, involved in the biosynthesis of branched-chain amino acids (BCAA). Catalyzes an alkyl-migration followed by a ketol-acid reduction of (S)-2-acetolactate (S2AL) to yield (R)-2,3-dihydroxy-isovalerate. In the isomerase reaction, S2AL is rearranged via a Mg-dependent methyl migration to produce 3-hydroxy-3-methyl-2-ketobutyrate (HMKB). In the reductase reaction, this 2-ketoacid undergoes a metal-dependent reduction by NADPH to yield (R)-2,3-dihydroxy-isovalerate. This Geobacillus sp. (strain WCH70) protein is Ketol-acid reductoisomerase (NADP(+)).